The chain runs to 566 residues: MNKKIPKAILSDNERLKVASNFLRGTIAQDLQDNITGGFKGDNIQLIRFHGMYQQDDRDLRVERTCQKLEPLINMMLRCRLPGGIITPQQWLGIDSFATKHTLYGSIRLTTRQTFQFHGVLKPNLKNMHKLLHSLGLDSIATAGDMNRNVLCTSNPVESVLHQQVCNYAKMISEHFLPKTRAYAEIWLDGEKTETTEQEPILGANYLPRKFKISIVVPPLNDVDLHANDLNFIAISNLGQLVGFNVLVGGGLAMTHNDKSTYPRTASELGYISVVDTIKIAEAVITTQRDLGDRSNRKHAKTKYTIERVGVEFFKKEVEVRAGIKFKHIRPYSFTERGDRFGWVQGIDNQWHLTLFIENGRIIDDSHRKLKTGMLEIARIHQGDFRITANQNIIIAGVEKKHKATIELLARQYGLINNNITLQRKASMACVAFPTCPLAMAEAERFLPQFVTKVENIMSRHGLGQEKIILRVTGCPNGCGRAMLAEIGLVGKTIGRYNLYLGGDSIGTRIPRIYRENLTEEEILSIINDTTGRWARERQPDESYGDYVVRAGIIRPVINSALDFHN.

[4Fe-4S] cluster is bound by residues C430, C436, C475, and C479. C479 contributes to the siroheme binding site.

It belongs to the nitrite and sulfite reductase 4Fe-4S domain family. As to quaternary structure, alpha(8)-beta(8). The alpha component is a flavoprotein, the beta component is a hemoprotein. It depends on siroheme as a cofactor. Requires [4Fe-4S] cluster as cofactor.

It carries out the reaction hydrogen sulfide + 3 NADP(+) + 3 H2O = sulfite + 3 NADPH + 4 H(+). It participates in sulfur metabolism; hydrogen sulfide biosynthesis; hydrogen sulfide from sulfite (NADPH route): step 1/1. In terms of biological role, component of the sulfite reductase complex that catalyzes the 6-electron reduction of sulfite to sulfide. This is one of several activities required for the biosynthesis of L-cysteine from sulfate. This is Sulfite reductase [NADPH] hemoprotein beta-component from Baumannia cicadellinicola subsp. Homalodisca coagulata.